Consider the following 610-residue polypeptide: Glucoamylase ARB_02327-1 (610 aa).

Residues 1-18 (MRVTSLLWSSLVIPAAVG) form the signal peptide. Residues 19-24 (FQVRFK) constitute a propeptide that is removed on maturation. Asn49 is a glycosylation site (N-linked (GlcNAc...) asparagine). Residue Trp143 participates in substrate binding. Asn194 carries an N-linked (GlcNAc...) asparagine glycan. The active-site Proton acceptor is Asp199. Catalysis depends on Glu202, which acts as the Proton donor. Intrachain disulfides connect Cys233–Cys236, Cys245–Cys472, and Cys285–Cys293. The CBM20 domain occupies 504 to 610 (TALPTKNNVR…SGAIKRDTWR (107 aa)).

The protein belongs to the glycosyl hydrolase 15 family.

Its subcellular location is the secreted. It catalyses the reaction Hydrolysis of terminal (1-&gt;4)-linked alpha-D-glucose residues successively from non-reducing ends of the chains with release of beta-D-glucose.. This is Glucoamylase ARB_02327-1 from Arthroderma benhamiae (strain ATCC MYA-4681 / CBS 112371) (Trichophyton mentagrophytes).